The primary structure comprises 361 residues: Histidinol-phosphate aminotransferase (361 aa).

Residue Lys-223 is modified to N6-(pyridoxal phosphate)lysine.

The protein belongs to the class-II pyridoxal-phosphate-dependent aminotransferase family. Histidinol-phosphate aminotransferase subfamily. Homodimer. Pyridoxal 5'-phosphate serves as cofactor.

The enzyme catalyses L-histidinol phosphate + 2-oxoglutarate = 3-(imidazol-4-yl)-2-oxopropyl phosphate + L-glutamate. It functions in the pathway amino-acid biosynthesis; L-histidine biosynthesis; L-histidine from 5-phospho-alpha-D-ribose 1-diphosphate: step 7/9. This chain is Histidinol-phosphate aminotransferase, found in Deinococcus radiodurans (strain ATCC 13939 / DSM 20539 / JCM 16871 / CCUG 27074 / LMG 4051 / NBRC 15346 / NCIMB 9279 / VKM B-1422 / R1).